Consider the following 79-residue polypeptide: MKLTCVLIISVLFLTASQLITAVYSRDKQQYRAARLRDEMRNLKGARDCGEQGQGCYTRPCCPGLGCRAGATGGGVCQQ.

Positions Met-1–Ala-22 are cleaved as a signal peptide. Positions Val-23–Arg-47 are excised as a propeptide. 3 disulfide bridges follow: Cys-49–Cys-62, Cys-56–Cys-67, and Cys-61–Cys-77. Residues Pro-60 and Pro-63 each carry the 4-hydroxyproline modification.

It belongs to the conotoxin O1 superfamily. As to expression, expressed by the venom duct.

The protein resides in the secreted. Functionally, ion channel inhibitor that inhibits the increase in intracellular calcium upon depolarization in DRG neurons. In vivo, both intraperitoneal and intracranial injections into mice induce hyperactivity. This Conus terebra (Sea snail) protein is Conotoxin Tr6.3.